Reading from the N-terminus, the 374-residue chain is Transcription factor NF-E2 45 kDa subunit (374 aa).

Disordered regions lie at residues 1–21 (MSPCPPQQSRNRVTQLPIPEP) and 40–61 (LNAPSEPSFEPPAPVPYPGPPP). Residues 1–83 (MSPCPPQQSR…PGFPLPAPPY (83 aa)) are required for interaction with MAPK8. The transactivation domain stretch occupies residues 1–207 (MSPCPPQQSR…PPAETPLALE (207 aa)). The span at 48–61 (FEPPAPVPYPGPPP) shows a compositional bias: pro residues. 2 short sequence motifs (PXY motif) span residues 61–65 (PPPSY) and 79–83 (PAPPY). Residues 132-165 (LSAGPSKPQEDPESDSGLSLNYSDAESLELEGTE) are disordered. S158 bears the Phosphoserine; by MAPK8 mark. Residue S171 is modified to Phosphoserine; by PKA. The tract at residues 207-227 (EPSSGPVRAKPTARGEAGSRD) is disordered. A bZIP domain is found at 267 to 330 (LVRDIRRRGK…EVMRQQLTDL (64 aa)). Residues 269–288 (RDIRRRGKNKVAAQNCRKRK) form a basic motif region. Positions 292-299 (IVQLEREL) are leucine-zipper. A Glycyl lysine isopeptide (Lys-Gly) (interchain with G-Cter in SUMO); alternate cross-link involves residue K369. Residue K369 forms a Glycyl lysine isopeptide (Lys-Gly) (interchain with G-Cter in SUMO1); alternate linkage.

It belongs to the bZIP family. CNC subfamily. Homodimer; can bind DNA as a homodimer. Erythroid transcription activator nuclear factor erythroid-derived 2 (NF-E2), composed of a heterodimer of NFE2 and MAFK, possesses transactivation activity on beta-globin. Also forms high affinity heterodimer with MAFG; the interaction promotes erythropoiesis. Interacts (via the PXY motif 1) with ITCH (via the WW 1 domain); the interaction promotes 'Lys63'-linked ubiquitination of NFE2, translocates it to the cytoplasm and inhibits its transactivation activity. Interacts with KMT2D/MLL2; the interaction promotes transactivation of the beta-globin locus. Interacts with MAPK8 (phosphorylated form); the interaction leads to phosphorylation of NFE2 in undifferentiated cells. Post-translationally, phosphorylated on serine residues. In undifferentiated erythrocytes, phosphorylated by MAPK8 which then leads to ubiquitination and protein degradation. In terms of processing, sumoylated. Sumoylation is required for translocation to nuclear bodies PODs, anchoring to the gene loci, and transactivation of the beta-globin gene. Ubiquitinated mainly by 'Lys63'-linked ubiquitin. Polyubiquitination with 'Lys63'-linked ubiquitin by ITCH retains NFE2 in the cytoplasm preventing its transactivation activity. In undifferentiated erythrocyte, is ubiquitinated after MAPK8-mediatd phosphorylation leading to protein degradation.

It is found in the nucleus. Its subcellular location is the cytoplasm. Functionally, component of the NF-E2 complex essential for regulating erythroid and megakaryocytic maturation and differentiation. Binds to the hypersensitive site 2 (HS2) of the beta-globin control region (LCR). This subunit (NFE2) recognizes the TCAT/C sequence of the AP-1-like core palindrome present in a number of erythroid and megakaryocytic gene promoters. Requires MAFK or other small MAF proteins for binding to the NF-E2 motif. May play a role in all aspects of hemoglobin production from globin and heme synthesis to procurement of iron. This is Transcription factor NF-E2 45 kDa subunit (NFE2) from Bos taurus (Bovine).